We begin with the raw amino-acid sequence, 89 residues long: Neuropeptide F (89 aa).

The first 29 residues, 1–29 (MASGTFTQRLLVALMIFALIADLSTLVAA), serve as a signal peptide directing secretion. The residue at position 61 (Phe-61) is a Phenylalanine amide. The propeptide occupies 65–89 (GGYLNPAIFGQDEQEVDWQDSTFSR).

This sequence belongs to the NPY family.

The protein resides in the secreted. In terms of biological role, an integral part of the sensory system that mediates food signaling, providing the neural basis for the regulation of food response; coordinates larval foraging and social behavior changes during development. May have a hormonal role in females. In Anopheles gambiae (African malaria mosquito), this protein is Neuropeptide F.